The primary structure comprises 59 residues: Conotoxin ViVA (59 aa).

Residues 1–19 (MRCVPVFIILLLLIPSASS) form the signal peptide. Positions 20 to 46 (AAVQPKTEKDDVPLASVHDSALRILSR) are excised as a propeptide. Pyrrolidone carboxylic acid is present on glutamine 47. Disulfide bonds link cysteine 48–cysteine 55 and cysteine 49–cysteine 56. At isoleucine 58 the chain carries Isoleucine amide.

It belongs to the conotoxin T superfamily. Expressed by the venom duct.

The protein resides in the secreted. This is Conotoxin ViVA from Conus virgo (Virgin cone).